We begin with the raw amino-acid sequence, 236 residues long: Phosphoribosylaminoimidazole-succinocarboxamide synthase (236 aa).

This sequence belongs to the SAICAR synthetase family.

It carries out the reaction 5-amino-1-(5-phospho-D-ribosyl)imidazole-4-carboxylate + L-aspartate + ATP = (2S)-2-[5-amino-1-(5-phospho-beta-D-ribosyl)imidazole-4-carboxamido]succinate + ADP + phosphate + 2 H(+). It participates in purine metabolism; IMP biosynthesis via de novo pathway; 5-amino-1-(5-phospho-D-ribosyl)imidazole-4-carboxamide from 5-amino-1-(5-phospho-D-ribosyl)imidazole-4-carboxylate: step 1/2. The chain is Phosphoribosylaminoimidazole-succinocarboxamide synthase from Lysinibacillus sphaericus (strain C3-41).